Here is a 270-residue protein sequence, read N- to C-terminus: Putative pyruvate, phosphate dikinase regulatory protein (270 aa).

ADP is bound at residue 151–158; sequence GVSRTSKT.

It belongs to the pyruvate, phosphate/water dikinase regulatory protein family. PDRP subfamily.

It catalyses the reaction N(tele)-phospho-L-histidyl/L-threonyl-[pyruvate, phosphate dikinase] + ADP = N(tele)-phospho-L-histidyl/O-phospho-L-threonyl-[pyruvate, phosphate dikinase] + AMP + H(+). The catalysed reaction is N(tele)-phospho-L-histidyl/O-phospho-L-threonyl-[pyruvate, phosphate dikinase] + phosphate + H(+) = N(tele)-phospho-L-histidyl/L-threonyl-[pyruvate, phosphate dikinase] + diphosphate. In terms of biological role, bifunctional serine/threonine kinase and phosphorylase involved in the regulation of the pyruvate, phosphate dikinase (PPDK) by catalyzing its phosphorylation/dephosphorylation. In Bacillus subtilis (strain 168), this protein is Putative pyruvate, phosphate dikinase regulatory protein (yqfL).